Consider the following 410-residue polypeptide: Dipeptidase ataJ (410 aa).

Positions 27, 29, and 138 each coordinate Zn(2+). His-165 contacts substrate. A disordered region spans residues 180–200; it reads TSSPWSEYGGQTHDPGDEPSR. The substrate site is built by Arg-258 and Asp-318.

This sequence belongs to the metallo-dependent hydrolases superfamily. Peptidase M19 family. Zn(2+) is required as a cofactor.

It catalyses the reaction an L-aminoacyl-L-amino acid + H2O = 2 an L-alpha-amino acid. It functions in the pathway mycotoxin biosynthesis. Functionally, dipeptidase; part of the gene cluster that mediates the biosynthesis of acetylaranotin, a member of the epipolythiodioxopiperazine (ETP) class of toxins characterized by a disulfide-bridged cyclic dipeptide. The first step of acetylaranotin biosynthesis is performed by the NRPS ataP which produces diketopiperazine cyclo-L-Phe-L-Phe via the condensation of 2 phenylalanines (L-Phe). The ataC domain of ataTC then catalyzes the formation of bishydroxylation of cyclo-L-Phe-L-Phe. The glutathione S-transferase domain ataG in ataIMG further catalyzes the conjugation of two glutathiones to the bishydroxylated intermediate. Next, the dipeptidase ataJ removes the Glu residues. The following step is performed by the carbon sulfur lyase domain ataI of ataIMG which may convert the bis-cysteinyl adduct to yield an epidithiol intermediate. The ataT domain from ataTC then catalyzes the oxidation of the free dithiols, followed by a cyclization step catalyzed by the cytochrome P450 ataF. AtaF probably acts as an epoxidase to promote a dual epoxidation formation at C8 and C9 along with C8' and C9', followed by the spontaneous nucleophilic attack of the amide nitrogens N10 and N10' to yield an intermediate with the pyrrolidine partial structure. The final steps of acetylaranotin biosynthesis involve the acetylation and ring rearrangement of an epitetrathiodiketopiperazine intermediate to produce acetylaranotin. AtaH probably catalyzes the acetylation of epitetrathiodiketopiperazine to produce a diacetate and ataY is responsible for the formation of the dihydrooxepin moiety that converts the diacetate intermediate to acetylaranotin via acetylapoaranotin. Both enzymes could function independently in the absence of the other. The acetylaranotin bis-thiomethyltransferase ataS located outside of acetylaranotin gene cluster is the main thiomethyltransferase responsible for converting acetylaranotin and its related intermediates to their methylated forms. The protein is Dipeptidase ataJ of Aspergillus terreus (strain NIH 2624 / FGSC A1156).